The chain runs to 740 residues: ATP-dependent RNA helicase DDX1 (740 aa).

Residues 1-295 (MAAFSEMGVM…APKALIVEPS (295 aa)) form a necessary for interaction with HNRNPK region. The interval 1 to 448 (MAAFSEMGVM…DTVHHVVVPV (448 aa)) is interaction with dsRNA. Positions 1-525 (MAAFSEMGVM…KIDCDNLEQY (525 aa)) are necessary for interaction with RELA. One can recognise a Helicase ATP-binding domain in the interval 2–428 (AAFSEMGVMP…SEKIMHFPTW (427 aa)). 46-53 (AETGSGKT) provides a ligand contact to ATP. Positions 70 to 247 (DQQEGKKGKT…LKFNFGEEEF (178 aa)) constitute a B30.2/SPRY domain. Residues Lys239 and Lys268 each carry the N6-acetyllysine modification. Lys281 bears the N6-acetyllysine; alternate mark. Lys281 is covalently cross-linked (Glycyl lysine isopeptide (Lys-Gly) (interchain with G-Cter in SUMO2); alternate). A DEAD box motif is present at residues 370-373 (DEAD). Position 481 is a phosphoserine (Ser481). The Helicase C-terminal domain occupies 493 to 681 (KGEYAVRAIK…QVEPDIKVPV (189 aa)). Residues 525 to 740 (YFMQQGGGPD…YLPNQLFRTF (216 aa)) form a necessary for interaction with HNRNPK region.

The protein belongs to the DEAD box helicase family. DDX1 subfamily. In terms of assembly, found in a multi-helicase-TICAM1 complex at least composed of DHX36, DDX1, DDX21 and TICAM1; this complex exists in resting cells with or without poly(I:C) RNA ligand stimulation. Interacts with DHX36. Interacts (via B30.2/SPRY domain) with DDX21 (via N-terminus); this interaction serves as bridges to TICAM1. Interacts with FAM98A (via N- and C-terminus). Interacts with PHF5A (via C-terminus). Interacts with MBNL1. Interacts with CSTF2. Interacts with HNRNPK. Interacts with ATM. Interacts with RELA (via C-terminus). Component of the tRNA-splicing ligase complex. Interacts with PQBP1. Interacts with ERCC6. Phosphorylated by ATM kinase; phosphorylation is increased in response to ionizing radiation (IR).

The protein localises to the nucleus. The protein resides in the cytoplasm. Its subcellular location is the cytoplasmic granule. It localises to the cytosol. It is found in the mitochondrion. The catalysed reaction is ATP + H2O = ADP + phosphate + H(+). Functionally, acts as an ATP-dependent RNA helicase, able to unwind both RNA-RNA and RNA-DNA duplexes. Possesses 5' single-stranded RNA overhang nuclease activity. Possesses ATPase activity on various RNA, but not DNA polynucleotides. May play a role in RNA clearance at DNA double-strand breaks (DSBs), thereby facilitating the template-guided repair of transcriptionally active regions of the genome. Together with RELA, acts as a coactivator to enhance NF-kappa-B-mediated transcriptional activation. Acts as a positive transcriptional regulator of cyclin CCND2 expression. Binds to the cyclin CCND2 promoter region. Associates with chromatin at the NF-kappa-B promoter region via association with RELA. Binds to poly(A) RNA. May be involved in 3'-end cleavage and polyadenylation of pre-mRNAs. Component of the tRNA-splicing ligase complex required to facilitate the enzymatic turnover of catalytic subunit RTCB: together with archease (ZBTB8OS), acts by facilitating the guanylylation of RTCB, a key intermediate step in tRNA ligation. Component of a multi-helicase-TICAM1 complex that acts as a cytoplasmic sensor of viral double-stranded RNA (dsRNA) and plays a role in the activation of a cascade of antiviral responses including the induction of pro-inflammatory cytokines via the adapter molecule TICAM1. Specifically binds (via helicase ATP-binding domain) on both short and long poly(I:C) dsRNA. The chain is ATP-dependent RNA helicase DDX1 (DDX1) from Macaca fascicularis (Crab-eating macaque).